The following is a 273-amino-acid chain: Phosphate import ATP-binding protein PstB (273 aa).

One can recognise an ABC transporter domain in the interval 26 to 268 (MRGEKVCVFY…PTEKRTQDYI (243 aa)). 58–65 (GPSGCGKS) serves as a coordination point for ATP.

The protein belongs to the ABC transporter superfamily. Phosphate importer (TC 3.A.1.7) family. As to quaternary structure, the complex is composed of two ATP-binding proteins (PstB), two transmembrane proteins (PstC and PstA) and a solute-binding protein (PstS).

Its subcellular location is the cell inner membrane. It catalyses the reaction phosphate(out) + ATP + H2O = ADP + 2 phosphate(in) + H(+). Part of the ABC transporter complex PstSACB involved in phosphate import. Responsible for energy coupling to the transport system. This Brucella abortus (strain 2308) protein is Phosphate import ATP-binding protein PstB.